A 344-amino-acid polypeptide reads, in one-letter code: Krueppel-like factor 3 (344 aa).

Positions 1-74 (MLMFDPVPVK…TVNKRGSPPA (74 aa)) are repressor domain. Lysine 10 is covalently cross-linked (Glycyl lysine isopeptide (Lys-Gly) (interchain with G-Cter in SUMO)). Residues 60-68 (EPVDLTVNK) carry the 9aaTAD; inactive motif. A CTBP-binding motif motif is present at residues 61–65 (PVDLT). The tract at residues 66–111 (VNKRGSPPAAGGSPSSLKFPSHRRASPGLSMPSSSPPIKKYSPPSP) is disordered. Lysine 68 is covalently cross-linked (Glycyl lysine isopeptide (Lys-Gly) (interchain with G-Cter in SUMO2)). Low complexity-rich tracts occupy residues 70–81 (GSPPAAGGSPSS) and 91–107 (SPGL…KKYS). Residues serine 71, serine 91, serine 100, serine 107, and serine 110 each carry the phosphoserine modification. A Glycyl lysine isopeptide (Lys-Gly) (interchain with G-Cter in SUMO2) cross-link involves residue lysine 195. A Glycyl lysine isopeptide (Lys-Gly) (interchain with G-Cter in SUMO); alternate cross-link involves residue lysine 197. A Glycyl lysine isopeptide (Lys-Gly) (interchain with G-Cter in SUMO2); alternate cross-link involves residue lysine 197. Serine 215, serine 223, and serine 249 each carry phosphoserine. A disordered region spans residues 235–254 (SVIVQPGKRPLPVESPDTQR). 3 consecutive C2H2-type zinc fingers follow at residues 259 to 283 (HRCD…RRTH), 289 to 313 (YKCT…FRKH), and 319 to 341 (FQCP…RKRH).

The protein belongs to the krueppel C2H2-type zinc-finger protein family. As to quaternary structure, monomer. Sumoylated with SUMO1. Sumoylation is enhanced by PIAS1, PIAS2alpha and PIAS2beta, and PIAS4, but not by Pc2. Enhances transcriptional repression, but has no effect on DNA binding. Sumoylation on Lys-197 is the major site. As to expression, in 8.5 day embryos, expressed in midbrain, anterior hindbrain and ventral forebrain. In 9 day embryos, expressed throughout ventral anterior half of embryo including midbrain-hindbrain junction, ventral midbrain, diencephalon and forebrain. At 10.5 days, distribution is more widespread with expression also found in developing limb buds. Widely expressed in the adult.

It is found in the nucleus. Functionally, binds to the CACCC box of erythroid cell-expressed genes. May play a role in hematopoiesis. This is Krueppel-like factor 3 (Klf3) from Mus musculus (Mouse).